The following is a 589-amino-acid chain: Peroxisomal biogenesis factor 8 (589 aa).

Positions 587-589 (SKL) match the Microbody targeting signal motif.

Its subcellular location is the peroxisome matrix. In terms of biological role, required for peroxisome assembly. This Saccharomyces cerevisiae (strain ATCC 204508 / S288c) (Baker's yeast) protein is Peroxisomal biogenesis factor 8 (PEX8).